Reading from the N-terminus, the 91-residue chain is Ragulator complex protein LAMTOR5 homolog (91 aa).

The protein belongs to the LAMTOR5 family. As to quaternary structure, part of the Ragulator complex.

The protein resides in the cytoplasm. The protein localises to the lysosome. Functionally, regulator of the TOR pathway, a signaling cascade that promotes cell growth in response to growth factors, energy levels, and amino acids. As part of the Ragulator complex, may activate the TOR signaling cascade in response to amino acids. This is Ragulator complex protein LAMTOR5 homolog from Ixodes scapularis (Black-legged tick).